The primary structure comprises 304 residues: Hairy/enhancer-of-split related with YRPW motif protein 1 (304 aa).

The disordered stretch occupies residues Met1 to Arg52. Residues Glu28–Ile47 show a composition bias toward polar residues. Residues Leu48–Ala117 are transcriptional repression and interaction with NCOR1 and SIN3A. The 56-residue stretch at Ala49–Leu104 folds into the bHLH domain. One can recognise an Orange domain in the interval Tyr122 to Leu158. Residues Leu196–Ser234 are disordered. Over residues Gly200–Pro210 the composition is skewed to polar residues. The short motif at Tyr294 to Trp297 is the YRPW motif element.

Belongs to the HEY family. In terms of assembly, self-associates. Interacts with HES1 and HEYL. Interacts with HDAC1, NCOR1 and SIN3A. Interacts with GATA4 and GATA6. Interacts with CCDC89/BOIP. In terms of tissue distribution, expressed in the somitic mesoderm, the central nervous system, the kidney, the heart, nasal epithelium, and limbs.

It localises to the nucleus. Functionally, transcriptional repressor which binds preferentially to the canonical E box sequence 5'-CACGTG-3'. Downstream effector of Notch signaling required for cardiovascular development. Specifically required for the Notch-induced endocardial epithelial to mesenchymal transition, which is itself criticial for cardiac valve and septum development. May be required in conjunction with HEY2 to specify arterial cell fate or identity. Promotes maintenance of neuronal precursor cells and glial versus neuronal fate specification. Represses transcription by the cardiac transcriptional activators GATA4 and GATA6 and by the neuronal bHLH factors ASCL1/MASH1 and NEUROD4/MATH3. Involved in the regulation of liver cancer cells self-renewal. The sequence is that of Hairy/enhancer-of-split related with YRPW motif protein 1 (HEY1) from Homo sapiens (Human).